The chain runs to 535 residues: Bifunctional purine biosynthesis protein PurH (535 aa).

Residues 6–151 (TRLPVRRALI…KNHKDVAIVV (146 aa)) enclose the MGS-like domain.

This sequence belongs to the PurH family.

The catalysed reaction is (6R)-10-formyltetrahydrofolate + 5-amino-1-(5-phospho-beta-D-ribosyl)imidazole-4-carboxamide = 5-formamido-1-(5-phospho-D-ribosyl)imidazole-4-carboxamide + (6S)-5,6,7,8-tetrahydrofolate. It carries out the reaction IMP + H2O = 5-formamido-1-(5-phospho-D-ribosyl)imidazole-4-carboxamide. It functions in the pathway purine metabolism; IMP biosynthesis via de novo pathway; 5-formamido-1-(5-phospho-D-ribosyl)imidazole-4-carboxamide from 5-amino-1-(5-phospho-D-ribosyl)imidazole-4-carboxamide (10-formyl THF route): step 1/1. It participates in purine metabolism; IMP biosynthesis via de novo pathway; IMP from 5-formamido-1-(5-phospho-D-ribosyl)imidazole-4-carboxamide: step 1/1. The chain is Bifunctional purine biosynthesis protein PurH from Pseudomonas putida (strain GB-1).